The sequence spans 583 residues: Pescadillo (583 aa).

Residues glutamate 275–glutamate 329 are a coiled coil. Positions lysine 323–leucine 416 constitute a BRCT domain. Disordered stretches follow at residues arginine 448 to alanine 526 and alanine 558 to cysteine 583. Over residues glutamate 455–asparagine 489 the composition is skewed to acidic residues. Residues alanine 512–alanine 526 are compositionally biased toward basic and acidic residues.

Belongs to the pescadillo family. In terms of assembly, component of the PeBoW complex, composed of bop1, pes1 and wdr12. The complex is held together by bop1, which interacts with pes1 via its N-terminal domain and with wdr12 via a high-affinity interaction between the seven-bladed beta-propeller domains of the 2 proteins. The PeBoW complex associates with the 66S pre-ribosome.

The protein resides in the nucleus. The protein localises to the nucleolus. It localises to the nucleoplasm. Functionally, component of the PeBoW complex, which is required for maturation of 28S and 5.8S ribosomal RNAs and formation of the 60S ribosome. The chain is Pescadillo (pes) from Danio rerio (Zebrafish).